The primary structure comprises 98 residues: Large ribosomal subunit protein uL23 (98 aa).

Belongs to the universal ribosomal protein uL23 family. As to quaternary structure, part of the 50S ribosomal subunit. Contacts protein L29, and trigger factor when it is bound to the ribosome.

One of the early assembly proteins it binds 23S rRNA. One of the proteins that surrounds the polypeptide exit tunnel on the outside of the ribosome. Forms the main docking site for trigger factor binding to the ribosome. The chain is Large ribosomal subunit protein uL23 from Thioalkalivibrio sulfidiphilus (strain HL-EbGR7).